We begin with the raw amino-acid sequence, 432 residues long: 2-oxoglutarate-dependent dioxygenase AOP2 (432 aa).

Residues 281–378 enclose the Fe2OG dioxygenase domain; that stretch reads SGDDVEANDD…RYTAAIFTCP (98 aa). Fe cation-binding residues include His-301, Asp-303, and His-358. Arg-369 is a binding site for 2-oxoglutarate.

The protein belongs to the iron/ascorbate-dependent oxidoreductase family. Fe(2+) serves as cofactor.

Its function is as follows. 2-oxoglutarate-dependent dioxygenase involved in glucosinolates biosynthesis. Catalyzes the conversion of methylsulfinylalkyl glucosinolates to alkenyl glucosinolates. In Arabidopsis thaliana (Mouse-ear cress), this protein is 2-oxoglutarate-dependent dioxygenase AOP2 (AOP2).